A 437-amino-acid polypeptide reads, in one-letter code: Ribosomal protein uS12 methylthiotransferase RimO (437 aa).

One can recognise an MTTase N-terminal domain in the interval 5 to 116; sequence PTIAISHLGC…IVEIVERVET (112 aa). Residues cysteine 14, cysteine 50, cysteine 79, cysteine 154, cysteine 158, and cysteine 161 each contribute to the [4Fe-4S] cluster site. Residues 140–369 enclose the Radical SAM core domain; the sequence is TTSEGVAYLR…MLTQQPISER (230 aa). Positions 372-437 constitute a TRAM domain; the sequence is QAYIGQTVDV…DTYDLYGEIV (66 aa).

The protein belongs to the methylthiotransferase family. RimO subfamily. [4Fe-4S] cluster serves as cofactor.

The protein localises to the cytoplasm. The enzyme catalyses L-aspartate(89)-[ribosomal protein uS12]-hydrogen + (sulfur carrier)-SH + AH2 + 2 S-adenosyl-L-methionine = 3-methylsulfanyl-L-aspartate(89)-[ribosomal protein uS12]-hydrogen + (sulfur carrier)-H + 5'-deoxyadenosine + L-methionine + A + S-adenosyl-L-homocysteine + 2 H(+). Its function is as follows. Catalyzes the methylthiolation of an aspartic acid residue of ribosomal protein uS12. The chain is Ribosomal protein uS12 methylthiotransferase RimO from Microcystis aeruginosa (strain NIES-843 / IAM M-2473).